We begin with the raw amino-acid sequence, 143 residues long: Root meristem growth factor 10 (143 aa).

A signal peptide spans 1-27 (MDMLRSACFYFLLIVFVILSWSLLCDS). Positions 28–130 (RHLGHMEKKL…SDQEHPGFNL (103 aa)) are excised as a propeptide. N-linked (GlcNAc...) asparagine glycosylation is present at Asn60. Residues 74-83 (NHGDNGQING) show a composition bias toward polar residues. The interval 74-143 (NHGDNGQING…QPTTHPPHHN (70 aa)) is disordered. The Nuclear localization signal signature appears at 92–99 (VKRASDKK). Tyr132 bears the Sulfotyrosine mark. A Hydroxyproline modification is found at Pro140.

This sequence belongs to the RGF family. Binds to LRR receptor-like serine/threonine-protein kinases RGI1, RGI2 and RGI3 to trigger their dimerization with SERK proteins and subsequent signaling. In terms of processing, the tyrosine sulfation is critical for the function of the peptide. Expressed in root tips.

Its subcellular location is the secreted. It is found in the nucleus. Functionally, maintains the postembryonic root stem cell niche by regulating the expression levels and patterns of the transcription factor PLETHORA (PLT), mainly at the post-transcriptional level. Promotes root elongation. This chain is Root meristem growth factor 10, found in Arabidopsis thaliana (Mouse-ear cress).